A 411-amino-acid chain; its full sequence is Allantoate amidohydrolase (411 aa).

4 residues coordinate Zn(2+): H81, D92, E127, and H190. The allantoate site is built by R215, N275, and R288. Residue H382 participates in Zn(2+) binding.

Belongs to the peptidase M20 family. In terms of assembly, homodimer. Zn(2+) is required as a cofactor.

The protein localises to the cytoplasm. It carries out the reaction allantoate + H2O + 2 H(+) = (S)-2-ureidoglycine + NH4(+) + CO2. Its pathway is nitrogen metabolism; (S)-allantoin degradation. With respect to regulation, sulfate could be an allosteric effector of the enzyme that is responsible for stabilizing substrate binding. In addition, this anion effector may act as a counterion during enzyme-mediated catalysis. Its function is as follows. Involved in the anaerobic nitrogen utilization via the assimilation of allantoin. Catalyzes specifically the hydrolysis of allantoate to yield CO2, NH3 and S-ureidoglycine, which is unstable and readily undergoes a second deamination by S-ureidoglycine aminohydrolase AllE to yield S-ureidoglycolate and NH3. In vivo, the spontaneous release of S-ureidoglycolate and ammonia from S-ureidoglycine appears to be too slow to sustain an efficient flux of nitrogen. This is Allantoate amidohydrolase from Escherichia coli (strain K12).